Here is a 64-residue protein sequence, read N- to C-terminus: MKAKELRELDNAALNEKLAEARQELFNLRFQHATAQLENTQRLSDVKKDIAKILTVQREKELGA.

Belongs to the universal ribosomal protein uL29 family.

The polypeptide is Large ribosomal subunit protein uL29 (Maridesulfovibrio salexigens (strain ATCC 14822 / DSM 2638 / NCIMB 8403 / VKM B-1763) (Desulfovibrio salexigens)).